The primary structure comprises 100 residues: Urease subunit gamma (100 aa).

The protein belongs to the urease gamma subunit family. In terms of assembly, heterotrimer of UreA (gamma), UreB (beta) and UreC (alpha) subunits. Three heterotrimers associate to form the active enzyme.

The protein localises to the cytoplasm. It catalyses the reaction urea + 2 H2O + H(+) = hydrogencarbonate + 2 NH4(+). It participates in nitrogen metabolism; urea degradation; CO(2) and NH(3) from urea (urease route): step 1/1. This chain is Urease subunit gamma, found in Rhizobium rhizogenes (strain K84 / ATCC BAA-868) (Agrobacterium radiobacter).